Reading from the N-terminus, the 549-residue chain is Lipase 5 (549 aa).

The N-terminal stretch at methionine 1–alanine 15 is a signal peptide. Cysteine 75 and cysteine 112 are joined by a disulfide. The active-site Acyl-ester intermediate is serine 224. A disulfide bond links cysteine 283 and cysteine 292. N-linked (GlcNAc...) asparagine glycosylation occurs at asparagine 329. Glutamate 356 (charge relay system) is an active-site residue. N-linked (GlcNAc...) asparagine glycosylation is present at asparagine 366. Histidine 464 functions as the Charge relay system in the catalytic mechanism.

This sequence belongs to the type-B carboxylesterase/lipase family.

The enzyme catalyses a triacylglycerol + H2O = a diacylglycerol + a fatty acid + H(+). The protein is Lipase 5 (LIP5) of Diutina rugosa (Yeast).